Consider the following 243-residue polypeptide: Probable flavin-dependent thymidylate synthase (243 aa).

The 219-residue stretch at 21–239 folds into the ThyX domain; the sequence is FEVDDFEESK…PNTYQDIPDV (219 aa). Residues Ser-80 and 103–105 contribute to the FAD site; that span reads RHR. DUMP contacts are provided by residues 100 to 103, 113 to 115, and Arg-178; these read ELER and SQR. The ThyX motif motif lies at 103 to 113; it reads RHRHLSFSVVS. Residue 194 to 196 coordinates FAD; sequence NHR. Position 205 (Arg-205) interacts with dUMP. Arg-205 acts as the Involved in ionization of N3 of dUMP, leading to its activation in catalysis.

The protein belongs to the thymidylate synthase ThyX family. In terms of assembly, homotetramer. FAD serves as cofactor.

It catalyses the reaction dUMP + (6R)-5,10-methylene-5,6,7,8-tetrahydrofolate + NADPH + H(+) = dTMP + (6S)-5,6,7,8-tetrahydrofolate + NADP(+). The protein operates within pyrimidine metabolism; dTTP biosynthesis. In terms of biological role, catalyzes the reductive methylation of 2'-deoxyuridine-5'-monophosphate (dUMP) to 2'-deoxythymidine-5'-monophosphate (dTMP) while utilizing 5,10-methylenetetrahydrofolate (mTHF) as the methyl donor, and NADPH and FADH(2) as the reductant. This chain is Probable flavin-dependent thymidylate synthase (48), found in Mycobacterium phage L5 (Mycobacteriophage L5).